A 178-amino-acid polypeptide reads, in one-letter code: Large ribosomal subunit protein uL6 (178 aa).

The protein belongs to the universal ribosomal protein uL6 family. Part of the 50S ribosomal subunit.

Functionally, this protein binds to the 23S rRNA, and is important in its secondary structure. It is located near the subunit interface in the base of the L7/L12 stalk, and near the tRNA binding site of the peptidyltransferase center. This chain is Large ribosomal subunit protein uL6, found in Wolinella succinogenes (strain ATCC 29543 / DSM 1740 / CCUG 13145 / JCM 31913 / LMG 7466 / NCTC 11488 / FDC 602W) (Vibrio succinogenes).